The chain runs to 446 residues: Coagulation factor VII (446 aa).

The signal sequence occupies residues Met-1–Val-24. A propeptide spanning residues Val-25–Arg-41 is cleaved from the precursor. In terms of domain architecture, Gla spans Ala-42–Ser-86. 4-carboxyglutamate is present on residues Glu-47, Glu-48, Glu-55, Glu-57, Glu-60, Glu-61, Glu-66, Glu-67, Glu-70, and Glu-76. Cys-58 and Cys-63 are oxidised to a cystine. In terms of domain architecture, EGF-like 1; calcium-binding spans Asp-87–Glu-123. Cystine bridges form between Cys-91–Cys-102, Cys-96–Cys-111, Cys-113–Cys-122, Cys-132–Cys-143, Cys-139–Cys-153, Cys-155–Cys-168, Cys-176–Cys-303, Cys-200–Cys-205, Cys-219–Cys-235, and Cys-351–Cys-370. A glycan (O-linked (Glc...) serine; alternate) is linked at Ser-93. O-linked (Xyl...) serine; alternate glycosylation occurs at Ser-93. Thr-101 is a glycosylation site (O-linked (Fuc) threonine). At Asp-104 the chain carries (3R)-3-hydroxyaspartate. The EGF-like 2 domain occupies Glu-128–Lys-169. Asn-186 carries N-linked (GlcNAc...) asparagine glycosylation. The Peptidase S1 domain maps to Ile-194–Asp-433. The active-site Charge relay system is His-234. Asn-244 carries N-linked (GlcNAc...) asparagine glycosylation. Residue Asp-283 is the Charge relay system of the active site. Substrate is bound at residue Asp-379. Residues Cys-381 and Cys-409 are joined by a disulfide bond. The active-site Charge relay system is Ser-385.

The protein belongs to the peptidase S1 family. As to quaternary structure, heterodimer of a light chain and a heavy chain linked by a disulfide bond. The vitamin K-dependent, enzymatic carboxylation of some glutamate residues allows the modified protein to bind calcium. Post-translationally, the iron and 2-oxoglutarate dependent 3-hydroxylation of aspartate and asparagine is (R) stereospecific within EGF domains. In terms of processing, can be either O-glucosylated or O-xylosylated at Ser-93 by POGLUT1. Plasma.

Its subcellular location is the secreted. It carries out the reaction Selective cleavage of Arg-|-Ile bond in factor X to form factor Xa.. Its function is as follows. Initiates the extrinsic pathway of blood coagulation. Serine protease that circulates in the blood in a zymogen form. Factor VII is converted to factor VIIa by factor Xa, factor XIIa, factor IXa, or thrombin by minor proteolysis. In the presence of tissue factor and calcium ions, factor VIIa then converts factor X to factor Xa by limited proteolysis. Factor VIIa also converts factor IX to factor IXa in the presence of tissue factor and calcium. The protein is Coagulation factor VII (F7) of Rattus norvegicus (Rat).